A 386-amino-acid chain; its full sequence is IgA receptor (386 aa).

The N-terminal stretch at Met-1 to Ala-41 is a signal peptide. Positions Ala-42–Gln-152 are igA-binding. Basic and acidic residues-rich tracts occupy residues Tyr-79–Gln-88, Gln-97–Glu-128, Glu-134–Ile-166, Leu-174–Ile-201, Leu-209–Lys-221, Glu-233–Ile-243, and Leu-251–Ala-267. Disordered regions lie at residues Tyr-79–Lys-221 and Glu-233–Asp-268. 3 C repeats span residues Gln-158 to His-192, Gln-193 to Leu-227, and Gln-235 to Leu-269. D repeat units lie at residues Ala-302–Glu-307, Ala-308–Glu-313, Ala-316–Glu-321, and Ala-323–Asn-328. The tract at residues Ala-323–Ala-360 is disordered. Residues Ala-339 to Thr-359 are compositionally biased toward polar residues. The LPXTG sorting signal motif lies at Leu-353 to Gly-357. Pentaglycyl murein peptidoglycan amidated threonine is present on Thr-356. A propeptide spans Gly-357–Asn-386 (removed by sortase).

The protein belongs to the M protein family.

The protein localises to the secreted. It is found in the cell wall. Its function is as follows. Binds IgA of both subclasses, and also binds polyclonal IgG weakly. The protein is IgA receptor (arp4) of Streptococcus pyogenes.